The chain runs to 395 residues: Dual specificity mitogen-activated protein kinase kinase 1 (395 aa).

The interval 1-24 is disordered; that stretch reads MPKKKPTPIQLNPNPEGTAVNGTP. Residues 9–24 are compositionally biased toward polar residues; the sequence is IQLNPNPEGTAVNGTP. The 296-residue stretch at 68 to 363 folds into the Protein kinase domain; it reads FEKVSELGAG…LKQLMVHSFI (296 aa). ATP is bound by residues 74 to 82 and K97; that span reads LGAGNGGVV. The active-site Proton acceptor is the D190. A phosphoserine; by RAF mark is found at S218 and S222. The disordered stretch occupies residues 284 to 305; sequence ASSELAPRPRPPGRPISSYGPD.

The protein belongs to the protein kinase superfamily. STE Ser/Thr protein kinase family. MAP kinase kinase subfamily. Activated by phosphorylation on Ser/Thr catalyzed by MAP kinase kinase kinases (RAF or MOS). Expressed in the central nervous system, kidney, liver, intestine and the hematopoietic system.

The protein localises to the cytoplasm. Its subcellular location is the cytoskeleton. It localises to the microtubule organizing center. It is found in the centrosome. The protein resides in the spindle pole body. The protein localises to the nucleus. The catalysed reaction is L-seryl-[protein] + ATP = O-phospho-L-seryl-[protein] + ADP + H(+). It catalyses the reaction L-threonyl-[protein] + ATP = O-phospho-L-threonyl-[protein] + ADP + H(+). The enzyme catalyses L-tyrosyl-[protein] + ATP = O-phospho-L-tyrosyl-[protein] + ADP + H(+). Its function is as follows. Dual specificity protein kinase which acts as an essential component of the MAP kinase signal transduction pathway. Binding of extracellular ligands such as growth factors, cytokines and hormones to their cell-surface receptors activates the MAPK/ERK cascade, ultimately leading to phosphorylation of a threonine and a tyrosine residue in a Thr-Glu-Tyr sequence located in MAP kinases. Depending on the cellular context, this pathway mediates diverse biological functions such as cell growth, adhesion, survival and differentiation predominantly through the regulation of transcription, metabolism and cytoskeletal rearrangements. The polypeptide is Dual specificity mitogen-activated protein kinase kinase 1 (map2k1) (Xenopus laevis (African clawed frog)).